Here is a 550-residue protein sequence, read N- to C-terminus: Cell pattern formation-associated protein STUA (550 aa).

One can recognise an HTH APSES-type domain in the interval 86–192 (RVTATLWEDE…HNIGALLYHP (107 aa)). The H-T-H motif DNA-binding region spans 120–141 (GTKLLNVAGMTRGRRDGILKSE). Residues 246–266 (SLANGPQSLASTPQPLTNGSQ) show a composition bias toward polar residues. Disordered regions lie at residues 246 to 277 (SLAN…GMLK), 371 to 412 (HHQP…VKRR), 447 to 467 (KRRD…DHLN), and 527 to 550 (APVY…QSFG). A compositionally biased stretch (basic and acidic residues) spans 385 to 395 (RGRDEDDDVHR). Residues 517–546 (TVAASPSYPSAPVYDTGARPPSAISAPRRQ) form a nuclear localization domain region.

It belongs to the EFG1/PHD1/stuA family.

The protein resides in the nucleus. In terms of biological role, transcription factor that regulates asexual reproduction. Binds the StuA-response elements (StRE) with the consensus sequence 5'-(A/T)CGCG(T/A)N(A/C)-3' at the promoters of target genes. Differentially regulates the development of macroconidia, microconidia, and chlamydospores. Acts as a positive regulator for the development of macroconidia and as a negative regulator for the development of chlamydospores. Involved in microconidium formation specifically in infected plants. This chain is Cell pattern formation-associated protein STUA, found in Fusarium oxysporum (Fusarium vascular wilt).